A 283-amino-acid chain; its full sequence is Homeobox-leucine zipper protein HAT2 (283 aa).

The tract at residues 64-134 (VNCEEDTGVS…GETSRKKLRL (71 aa)) is disordered. The span at 73–84 (SSPNSTISSTIS) shows a compositional bias: low complexity. The segment at residues 127–186 (TSRKKLRLSKDQSAFLEETFKEHNTLNPKQKLALAKKLNLTARQVEVWFQNRRARTKLKQ) is a DNA-binding region (homeobox). A leucine-zipper region spans residues 194–215 (LKRCVEKLTEENRRLQKEAMEL).

Belongs to the HD-ZIP homeobox family. Class II subfamily. As to quaternary structure, interacts with RBR1.

The protein resides in the nucleus. Functionally, probable transcription factor that plays a role in auxin-mediated morphogenesis. Negatively regulates lateral root elongation. This chain is Homeobox-leucine zipper protein HAT2 (HAT2), found in Arabidopsis thaliana (Mouse-ear cress).